Reading from the N-terminus, the 357-residue chain is Protein RecA (357 aa).

67–74 is an ATP binding site; it reads GPESSGKT. Residues 335 to 357 are disordered; that stretch reads LSSSASDDENSEGNVDFETGEVF.

The protein belongs to the RecA family.

The protein localises to the cytoplasm. Can catalyze the hydrolysis of ATP in the presence of single-stranded DNA, the ATP-dependent uptake of single-stranded DNA by duplex DNA, and the ATP-dependent hybridization of homologous single-stranded DNAs. It interacts with LexA causing its activation and leading to its autocatalytic cleavage. This Shewanella sp. (strain MR-4) protein is Protein RecA.